The sequence spans 298 residues: Rhodomycin D methylesterase DauP (298 aa).

One can recognise an AB hydrolase-1 domain in the interval 25-277 (PLLLIAGGNL…VEIENMGHAL (253 aa)).

The protein belongs to the methyl esterase DnrP family.

The enzyme catalyses rhodomycin D + H2O = 10-carboxy-13-deoxycarminomycin + methanol + H(+). The catalysed reaction is 4-O-methylrhodomycin D + H2O = 10-carboxy-13-deoxydaunorubicin + methanol + H(+). Its pathway is antibiotic biosynthesis; daunorubicin biosynthesis. It participates in antibiotic biosynthesis; carminomycin biosynthesis. Involved in the biosynthesis of the anthracyclines carminomycin and daunorubicin (daunomycin) which are aromatic polyketide antibiotics that exhibit high cytotoxicity and are widely applied in the chemotherapy of a variety of cancers. Catalyzes the removal of methyl group from the carbomethoxy group of rhodomycin D (10-carbomethoxy-13-deoxycarminomycin) and 4-O-methylrhodomycin D to yield 10-carboxy-13-deoxycarminomycin and 10-carboxy-13-deoxydaunorubicin, respectively. Could be also involved in the decarboxylation of 10-carboxy-13-deoxycarminomycin and 10-carboxy-13-deoxydaunorubicin to yield 13-deoxycarminomycin and 13-deoxydaunorubicin, respectively. It seems that DauK may influence the ability of DauP to carry out the decarboxylation. The sequence is that of Rhodomycin D methylesterase DauP (dauP) from Streptomyces sp. (strain C5).